The sequence spans 556 residues: Vacuolar protein 8 (556 aa).

A lipid anchor (N-myristoyl glycine) is attached at glycine 2. 3 S-palmitoyl cysteine lipidation sites follow: cysteine 4, cysteine 5, and cysteine 7. 9 ARM repeats span residues 38-74 (NRSE…AFAE), 75-115 (VTEK…NLAV), 117-156 (DSNK…NLAT), 158-197 (DQNK…NMTH), 199-238 (LENR…NIAV), 242-281 (NRKK…NLAS), 283-322 (ANYQ…NISI), 324-364 (PLNE…NLAA), and 408-447 (DDLK…NLCS).

The protein belongs to the beta-catenin family.

It localises to the vacuole membrane. Its function is as follows. Functions in both vacuole inheritance and protein targeting from the cytoplasm to vacuole. This Komagataella pastoris (Yeast) protein is Vacuolar protein 8 (VAC8).